Here is a 65-residue protein sequence, read N- to C-terminus: Large ribosomal subunit protein bL35 (65 aa).

Belongs to the bacterial ribosomal protein bL35 family.

The polypeptide is Large ribosomal subunit protein bL35 (Desulfitobacterium hafniense (strain DSM 10664 / DCB-2)).